A 397-amino-acid polypeptide reads, in one-letter code: Putative 8-amino-7-oxononanoate synthase (397 aa).

R22 serves as a coordination point for substrate. 109 to 110 (GW) is a binding site for pyridoxal 5'-phosphate. Residue H139 participates in substrate binding. Residues S187, 212–215 (DEAH), and 241–244 (TFSK) contribute to the pyridoxal 5'-phosphate site. K244 bears the N6-(pyridoxal phosphate)lysine mark. T358 contacts substrate.

This sequence belongs to the class-II pyridoxal-phosphate-dependent aminotransferase family. BioF subfamily. Homodimer. The cofactor is pyridoxal 5'-phosphate.

The catalysed reaction is 6-carboxyhexanoyl-[ACP] + L-alanine + H(+) = (8S)-8-amino-7-oxononanoate + holo-[ACP] + CO2. Its pathway is cofactor biosynthesis; biotin biosynthesis. In terms of biological role, catalyzes the decarboxylative condensation of pimeloyl-[acyl-carrier protein] and L-alanine to produce 8-amino-7-oxononanoate (AON), [acyl-carrier protein], and carbon dioxide. The chain is Putative 8-amino-7-oxononanoate synthase (bioF) from Bordetella pertussis (strain Tohama I / ATCC BAA-589 / NCTC 13251).